Here is a 523-residue protein sequence, read N- to C-terminus: 2-isopropylmalate synthase (523 aa).

The Pyruvate carboxyltransferase domain occupies 5–267; that stretch reads VIIFDTTLRD…HTAINHQEIW (263 aa). 4 residues coordinate Mn(2+): Asp14, His202, His204, and Asn238. Positions 392 to 523 are regulatory domain; it reads RLDYFSVQSG…QHNENNKETV (132 aa).

The protein belongs to the alpha-IPM synthase/homocitrate synthase family. LeuA type 1 subfamily. Homodimer. The cofactor is Mn(2+).

It is found in the cytoplasm. The catalysed reaction is 3-methyl-2-oxobutanoate + acetyl-CoA + H2O = (2S)-2-isopropylmalate + CoA + H(+). Its pathway is amino-acid biosynthesis; L-leucine biosynthesis; L-leucine from 3-methyl-2-oxobutanoate: step 1/4. Functionally, catalyzes the condensation of the acetyl group of acetyl-CoA with 3-methyl-2-oxobutanoate (2-ketoisovalerate) to form 3-carboxy-3-hydroxy-4-methylpentanoate (2-isopropylmalate). The polypeptide is 2-isopropylmalate synthase (Escherichia coli O127:H6 (strain E2348/69 / EPEC)).